The primary structure comprises 186 residues: Probable RNA 2'-phosphotransferase (186 aa).

It belongs to the KptA/TPT1 family.

Its function is as follows. Removes the 2'-phosphate from RNA via an intermediate in which the phosphate is ADP-ribosylated by NAD followed by a presumed transesterification to release the RNA and generate ADP-ribose 1''-2''-cyclic phosphate (APPR&gt;P). May function as an ADP-ribosylase. The sequence is that of Probable RNA 2'-phosphotransferase from Pectobacterium carotovorum subsp. carotovorum (strain PC1).